Here is a 969-residue protein sequence, read N- to C-terminus: Leucine--tRNA ligase (969 aa).

Positions 46-56 match the 'HIGH' region motif; the sequence is PYLNGVLHAGH. A 'KMSKS' region motif is present at residues 658-662; it reads KLSKS. An ATP-binding site is contributed by Lys-661.

It belongs to the class-I aminoacyl-tRNA synthetase family.

It localises to the cytoplasm. The catalysed reaction is tRNA(Leu) + L-leucine + ATP = L-leucyl-tRNA(Leu) + AMP + diphosphate. The polypeptide is Leucine--tRNA ligase (Methanococcus aeolicus (strain ATCC BAA-1280 / DSM 17508 / OCM 812 / Nankai-3)).